A 234-amino-acid polypeptide reads, in one-letter code: Ribose-5-phosphate isomerase A (234 aa).

Substrate-binding positions include 28 to 31, 83 to 86, and 96 to 99; these read TGST, DGAD, and KGGG. E105 serves as the catalytic Proton acceptor. K123 contributes to the substrate binding site.

This sequence belongs to the ribose 5-phosphate isomerase family. As to quaternary structure, homodimer.

The catalysed reaction is aldehydo-D-ribose 5-phosphate = D-ribulose 5-phosphate. It participates in carbohydrate degradation; pentose phosphate pathway; D-ribose 5-phosphate from D-ribulose 5-phosphate (non-oxidative stage): step 1/1. Its function is as follows. Catalyzes the reversible conversion of ribose-5-phosphate to ribulose 5-phosphate. In Bartonella quintana (strain Toulouse) (Rochalimaea quintana), this protein is Ribose-5-phosphate isomerase A.